Reading from the N-terminus, the 392-residue chain is 2-oxoisovalerate dehydrogenase subunit beta, mitochondrial (392 aa).

Residues 1–50 (MAVVAAAAGWLLRLRAAGAEGHWRRLPGAGLARGFLHPAATVEDAAQRRQ) constitute a mitochondrion transit peptide. Tyrosine 152 lines the thiamine diphosphate pocket. K(+)-binding residues include glycine 178, leucine 180, threonine 181, cysteine 228, and aspartate 231. Position 232 is an N6-acetyllysine (lysine 232). A K(+)-binding site is contributed by asparagine 233. Lysine 241 carries the N6-acetyllysine modification.

Heterotetramer of 2 alpha/BCKDHA and 2 beta chains/BCKDHB that forms the branched-chain alpha-keto acid decarboxylase (E1) component of the BCKD complex. The branched-chain alpha-ketoacid dehydrogenase is a large complex composed of three major building blocks E1, E2 and E3. It is organized around E2, a 24-meric cubic core composed of DBT, to which are associated 6 to 12 copies of E1, and approximately 6 copies of the dehydrogenase E3, a DLD dimer. It depends on thiamine diphosphate as a cofactor.

It is found in the mitochondrion matrix. It carries out the reaction N(6)-[(R)-lipoyl]-L-lysyl-[protein] + 3-methyl-2-oxobutanoate + H(+) = N(6)-[(R)-S(8)-2-methylpropanoyldihydrolipoyl]-L-lysyl-[protein] + CO2. Together with BCKDHA forms the heterotetrameric E1 subunit of the mitochondrial branched-chain alpha-ketoacid dehydrogenase (BCKD) complex. The BCKD complex catalyzes the multi-step oxidative decarboxylation of alpha-ketoacids derived from the branched-chain amino-acids valine, leucine and isoleucine producing CO2 and acyl-CoA which is subsequently utilized to produce energy. The E1 subunit catalyzes the first step with the decarboxylation of the alpha-ketoacid forming an enzyme-product intermediate. A reductive acylation mediated by the lipoylamide cofactor of E2 extracts the acyl group from the E1 active site for the next step of the reaction. The sequence is that of 2-oxoisovalerate dehydrogenase subunit beta, mitochondrial from Homo sapiens (Human).